Reading from the N-terminus, the 1551-residue chain is Serine/threonine-protein kinase MRCK gamma (1551 aa).

The 267-residue stretch at 71–337 (FEILKVIGRG…LDDFRNHPFF (267 aa)) folds into the Protein kinase domain. ATP-binding positions include 77–85 (IGRGAFGEV) and Lys-100. The Proton acceptor role is filled by Asp-195. 2 positions are modified to phosphoserine; by autocatalysis: Ser-216 and Ser-228. The residue at position 234 (Thr-234) is a Phosphothreonine; by autocatalysis. The AGC-kinase C-terminal domain occupies 338–408 (EGVDWERLAS…TSGSHSPESS (71 aa)). Coiled coils occupy residues 406–678 (ESSS…SNWE) and 730–802 (KARR…RARG). Disordered regions lie at residues 467–486 (KASL…QDSD), 655–675 (ELAQ…ETES), 801–849 (RGPV…PEGR), and 863–886 (TANT…PRSF). Over residues 655 to 674 (ELAQEQESKQRLEGERRETE) the composition is skewed to basic and acidic residues. The span at 835–849 (ATRHGGEPDLRPEGR) shows a compositional bias: basic and acidic residues. The Phorbol-ester/DAG-type zinc finger occupies 878–927 (SHTLRPRSFPSPTKCLRCTSLMLGLGRQGLGCDACGYFCHTTCAPQAPPC). Positions 947–1066 (GTAYEGFLSV…WLQVLGELQR (120 aa)) constitute a PH domain. One can recognise a CNH domain in the interval 1092–1366 (LPHTLCAAIL…RPLNPEGSLF (275 aa)). Residues 1437–1450 (ISPPTNFNHLVHVG) enclose the CRIB domain. The segment at 1442-1551 (NFNHLVHVGP…PLSPELESSP (110 aa)) is disordered. A compositionally biased stretch (basic and acidic residues) spans 1457–1470 (GARDKSPAPEEKGR). At Ser-1482 the chain carries Phosphoserine. The span at 1511–1533 (TSLSSESVSCPQGSLSPATSLMQ) shows a compositional bias: polar residues. Positions 1540 to 1551 (SLPLSPELESSP) are enriched in low complexity.

Belongs to the protein kinase superfamily. AGC Ser/Thr protein kinase family. DMPK subfamily. In terms of assembly, homodimer and homotetramer via the coiled coil regions. Interacts tightly with GTP-bound but not GDP-bound CDC42. Requires Mg(2+) as cofactor. As to expression, expressed in heart and skeletal muscle.

It localises to the cytoplasm. The enzyme catalyses L-seryl-[protein] + ATP = O-phospho-L-seryl-[protein] + ADP + H(+). It catalyses the reaction L-threonyl-[protein] + ATP = O-phospho-L-threonyl-[protein] + ADP + H(+). Its activity is regulated as follows. Maintained in an inactive, closed conformation by an interaction between the kinase domain and the negative autoregulatory C-terminal coiled-coil region. Agonist binding to the phorbol ester binding site disrupts this, releasing the kinase domain to allow N-terminus-mediated dimerization and kinase activation by transautophosphorylation. In terms of biological role, may act as a downstream effector of CDC42 in cytoskeletal reorganization. Contributes to the actomyosin contractility required for cell invasion, through the regulation of MYPT1 and thus MLC2 phosphorylation. In Homo sapiens (Human), this protein is Serine/threonine-protein kinase MRCK gamma.